Here is a 328-residue protein sequence, read N- to C-terminus: Ribosomal RNA small subunit methyltransferase H (328 aa).

Residues 37-39 (GGH), Asp57, Phe83, Asp104, and Gln111 contribute to the S-adenosyl-L-methionine site.

It belongs to the methyltransferase superfamily. RsmH family.

Its subcellular location is the cytoplasm. It catalyses the reaction cytidine(1402) in 16S rRNA + S-adenosyl-L-methionine = N(4)-methylcytidine(1402) in 16S rRNA + S-adenosyl-L-homocysteine + H(+). Functionally, specifically methylates the N4 position of cytidine in position 1402 (C1402) of 16S rRNA. In Neisseria meningitidis serogroup B (strain ATCC BAA-335 / MC58), this protein is Ribosomal RNA small subunit methyltransferase H.